Consider the following 328-residue polypeptide: Ketol-acid reductoisomerase (NADP(+)) (328 aa).

Positions 1 to 179 (MRVLYERDGD…GGGAAGIIET (179 aa)) constitute a KARI N-terminal Rossmann domain. NADP(+) contacts are provided by residues 24–27 (YGSQ), arginine 47, and serine 51. Histidine 106 is a catalytic residue. Glycine 132 lines the NADP(+) pocket. The KARI C-terminal knotted domain occupies 180 to 325 (TFVDETETDL…ARLRSRMTCA (146 aa)). Mg(2+) is bound by residues aspartate 188, glutamate 192, glutamate 224, and glutamate 228. Serine 249 lines the substrate pocket.

This sequence belongs to the ketol-acid reductoisomerase family. The cofactor is Mg(2+).

The enzyme catalyses (2R)-2,3-dihydroxy-3-methylbutanoate + NADP(+) = (2S)-2-acetolactate + NADPH + H(+). It carries out the reaction (2R,3R)-2,3-dihydroxy-3-methylpentanoate + NADP(+) = (S)-2-ethyl-2-hydroxy-3-oxobutanoate + NADPH + H(+). It participates in amino-acid biosynthesis; L-isoleucine biosynthesis; L-isoleucine from 2-oxobutanoate: step 2/4. The protein operates within amino-acid biosynthesis; L-valine biosynthesis; L-valine from pyruvate: step 2/4. Functionally, involved in the biosynthesis of branched-chain amino acids (BCAA). Catalyzes an alkyl-migration followed by a ketol-acid reduction of (S)-2-acetolactate (S2AL) to yield (R)-2,3-dihydroxy-isovalerate. In the isomerase reaction, S2AL is rearranged via a Mg-dependent methyl migration to produce 3-hydroxy-3-methyl-2-ketobutyrate (HMKB). In the reductase reaction, this 2-ketoacid undergoes a metal-dependent reduction by NADPH to yield (R)-2,3-dihydroxy-isovalerate. In Tremblaya princeps, this protein is Ketol-acid reductoisomerase (NADP(+)).